Here is a 2174-residue protein sequence, read N- to C-terminus: Mediator of RNA polymerase II transcription subunit 13 (2174 aa).

A Phosphoserine modification is found at serine 395. Residues 435–477 (RNAGQQGQAPSLGQQQQILPKHKTNEKQEKSEKPQKRPLTPFH) form a disordered region. A compositionally biased stretch (low complexity) spans 438 to 451 (GQQGQAPSLGQQQQ). Basic and acidic residues predominate over residues 457 to 469 (KTNEKQEKSEKPQ). Phosphoserine is present on residues serine 500, serine 504, serine 530, and serine 537. The span at 709–730 (FPDKKDRQNSEREAGKKHKVED) shows a compositional bias: basic and acidic residues. Disordered stretches follow at residues 709–735 (FPDK…TSSV), 749–769 (SPSI…PSTS), and 787–816 (FNSD…ESKT). Residues 805–815 (SDDKASCKESK) are compositionally biased toward basic and acidic residues. A phosphoserine mark is found at serine 826 and serine 890. The tract at residues 959-1054 (FIKEGDGSNM…ASTPSTCRPL (96 aa)) is disordered. Residues 992–1003 (PPSNSGAGILPS) are compositionally biased toward low complexity. Over residues 1004-1015 (PSTPRFPTPRTP) the composition is skewed to pro residues. Phosphoserine is present on serine 1029. Residues 1040 to 1053 (DLYSPASTPSTCRP) are compositionally biased toward polar residues. Short sequence motifs (LXXLL motif) lie at residues 1188 to 1192 (LILLL) and 1279 to 1283 (LRMLL). Composition is skewed to polar residues over residues 1484–1498 (SQSL…NTGN) and 1563–1606 (SMNS…SLPT). Disordered stretches follow at residues 1484-1505 (SQSL…PSAT), 1557-1617 (SFPP…ESTM), and 2015-2048 (LPAS…RLLS).

The protein belongs to the Mediator complex subunit 13 family. Component of the Mediator complex, which is composed of MED1, MED4, MED6, MED7, MED8, MED9, MED10, MED11, MED12, MED13, MED13L, MED14, MED15, MED16, MED17, MED18, MED19, MED20, MED21, MED22, MED23, MED24, MED25, MED26, MED27, MED29, MED30, MED31, CCNC, CDK8 and CDC2L6/CDK11. The MED12, MED13, CCNC and CDK8 subunits form a distinct module termed the CDK8 module. Mediator containing the CDK8 module is less active than Mediator lacking this module in supporting transcriptional activation. Individual preparations of the Mediator complex lacking one or more distinct subunits have been variously termed ARC, CRSP, DRIP, PC2, SMCC and TRAP. As to expression, ubiquitous.

The protein resides in the nucleus. Functionally, component of the Mediator complex, a coactivator involved in the regulated transcription of nearly all RNA polymerase II-dependent genes. Mediator functions as a bridge to convey information from gene-specific regulatory proteins to the basal RNA polymerase II transcription machinery. Mediator is recruited to promoters by direct interactions with regulatory proteins and serves as a scaffold for the assembly of a functional preinitiation complex with RNA polymerase II and the general transcription factors. The polypeptide is Mediator of RNA polymerase II transcription subunit 13 (Homo sapiens (Human)).